Here is a 347-residue protein sequence, read N- to C-terminus: Protein XRP2 (347 aa).

The span at 1–11 shows a compositional bias: basic residues; that stretch reads MGCCFTKRRKS. The segment at 1–22 is disordered; that stretch reads MGCCFTKRRKSEKAEGEEEQPK. The N-myristoyl glycine moiety is linked to residue glycine 2. Cysteine 3 is lipidated: S-palmitoyl cysteine. The C-CAP/cofactor C-like domain occupies 21 to 176; sequence PKLYSWDQRE…IWSHVHDFTP (156 aa). GTP-binding positions include 95–96 and 112–115; these read GS and QQFR.

It belongs to the TBCC family. As to quaternary structure, found in a complex with ARL3, RP2 and UNC119 (or UNC119B); RP2 induces hydrolysis of GTP ARL3 in the complex, leading to the release of UNC119 (or UNC119B). Interacts with ARL3; interaction is direct and stimulated with the activated GTP-bound form of ARL3. Myristoylated on Gly-2; which may be required for membrane targeting. Post-translationally, palmitoylated on Cys-3; which may be required for plasma membrane targeting. As to expression, retina (at protein level).

It localises to the cell membrane. The protein localises to the cell projection. It is found in the cilium. Functionally, acts as a GTPase-activating protein (GAP) involved in trafficking between the Golgi and the ciliary membrane. Involved in localization of proteins, such as NPHP3, to the cilium membrane by inducing hydrolysis of GTP ARL3, leading to the release of UNC119 (or UNC119B). Acts as a GTPase-activating protein (GAP) for tubulin in concert with tubulin-specific chaperone C, but does not enhance tubulin heterodimerization. Acts as a guanine nucleotide dissociation inhibitor towards ADP-ribosylation factor-like proteins. The polypeptide is Protein XRP2 (Rp2) (Mus musculus (Mouse)).